The following is a 950-amino-acid chain: Translation initiation factor IF-2 (950 aa).

Disordered stretches follow at residues 57–254 and 304–328; these read LAER…AVVI and DVSRDKRRGRQPGRPISEEQAKSLS. 2 stretches are compositionally biased toward low complexity: residues 101-131 and 139-169; these read AEPQYAEPQAEQAYEPEPQAAQPEAGAEPAA and AAPLAAQAAPSPGAEAAAPAAPQAQPAQPAA. Over residues 170-215 the composition is skewed to pro residues; the sequence is PAAPPAPTAQPSAPPPAAAQPRPPQPSAPSRPPPPGYRPAPPPGAR. Residues 216–233 show a composition bias toward low complexity; sequence PPVSAAPGAPGQPGAAGQ. Positions 449-618 constitute a tr-type G domain; it reads IRPPVVTVMG…ALQSEVLELK (170 aa). The G1 stretch occupies residues 458–465; it reads GHVDHGKT. 458 to 465 serves as a coordination point for GTP; it reads GHVDHGKT. Residues 483 to 487 are G2; that stretch reads GITQH. Residues 504 to 507 form a G3 region; it reads DTPG. GTP is bound by residues 504–508 and 558–561; these read DTPGH and NKVD. A G4 region spans residues 558-561; the sequence is NKVD. Positions 594 to 596 are G5; that stretch reads SAR.

Belongs to the TRAFAC class translation factor GTPase superfamily. Classic translation factor GTPase family. IF-2 subfamily.

It localises to the cytoplasm. Functionally, one of the essential components for the initiation of protein synthesis. Protects formylmethionyl-tRNA from spontaneous hydrolysis and promotes its binding to the 30S ribosomal subunits. Also involved in the hydrolysis of GTP during the formation of the 70S ribosomal complex. This is Translation initiation factor IF-2 from Anaeromyxobacter dehalogenans (strain 2CP-C).